The sequence spans 120 residues: Large ribosomal subunit protein uL18 (120 aa).

Belongs to the universal ribosomal protein uL18 family. As to quaternary structure, part of the 50S ribosomal subunit; part of the 5S rRNA/L5/L18/L25 subcomplex. Contacts the 5S and 23S rRNAs.

Its function is as follows. This is one of the proteins that bind and probably mediate the attachment of the 5S RNA into the large ribosomal subunit, where it forms part of the central protuberance. This Methylocella silvestris (strain DSM 15510 / CIP 108128 / LMG 27833 / NCIMB 13906 / BL2) protein is Large ribosomal subunit protein uL18.